Here is an 84-residue protein sequence, read N- to C-terminus: Large ribosomal subunit protein bL31B (84 aa).

This sequence belongs to the bacterial ribosomal protein bL31 family. Type B subfamily. As to quaternary structure, part of the 50S ribosomal subunit.

The protein is Large ribosomal subunit protein bL31B of Alkalilimnicola ehrlichii (strain ATCC BAA-1101 / DSM 17681 / MLHE-1).